The chain runs to 1486 residues: Chromosome partition protein MukB (1486 aa).

Position 34 to 41 (34 to 41) interacts with ATP; sequence GGNGAGKS. 3 coiled-coil regions span residues 326 to 418, 444 to 480, and 509 to 603; these read LEAD…QYNQ, LETF…QAYQ, and RHLA…RAPV. The flexible hinge stretch occupies residues 666-783; that stretch reads PGGSEDQRLN…EVPLFGRAAR (118 aa). Coiled coils occupy residues 835 to 923, 977 to 1115, and 1209 to 1266; these read EAEI…AKLE, EMLS…TAKA, and VEAI…QNVS.

Belongs to the SMC family. MukB subfamily. Homodimerization via its hinge domain. Binds to DNA via its C-terminal region. Interacts, and probably forms a ternary complex, with MukE and MukF via its C-terminal region. The complex formation is stimulated by calcium or magnesium. Interacts with tubulin-related protein FtsZ.

Its subcellular location is the cytoplasm. It localises to the nucleoid. In terms of biological role, plays a central role in chromosome condensation, segregation and cell cycle progression. Functions as a homodimer, which is essential for chromosome partition. Involved in negative DNA supercoiling in vivo, and by this means organize and compact chromosomes. May achieve or facilitate chromosome segregation by condensation DNA from both sides of a centrally located replisome during cell division. The polypeptide is Chromosome partition protein MukB (Shigella boydii serotype 18 (strain CDC 3083-94 / BS512)).